The sequence spans 261 residues: 8-demethyl-8-(2,3-dimethoxy-alpha-L-rhamnosyl)-tetracenomycin-C 4'-O-methyltransferase (261 aa).

Residues 53-54, 81-85, 111-115, phenylalanine 167, 185-186, and serine 191 contribute to the S-adenosyl-L-methionine site; these read TM, ETGVW, DSFEG, and DG. Aspartate 185 is a binding site for Mg(2+). Mg(2+)-binding residues include aspartate 212 and aspartate 213.

It belongs to the methyltransferase TylF/MycF family. The cofactor is Mg(2+).

It carries out the reaction 8-demethyl-8-(2,3-di-O-methyl-alpha-L-rhamnosyl)-tetracenomycin C + S-adenosyl-L-methionine = 8-demethyl-8-(2,3,4-tri-O-methyl-alpha-L-rhamnosyl)-tetracenomycin C + S-adenosyl-L-homocysteine + H(+). The protein operates within antibiotic biosynthesis. Functionally, O-methyltransferase involved in the biosynthesis of the permethylated L-rhamnose moiety of elloramycin, an antitumor polyketide. Mediates the methylation of the hydroxy groups at the 4'-position after the sugar moiety has been attached to the aglycon. This Streptomyces olivaceus protein is 8-demethyl-8-(2,3-dimethoxy-alpha-L-rhamnosyl)-tetracenomycin-C 4'-O-methyltransferase.